Consider the following 110-residue polypeptide: Iron-sulfur cluster insertion protein ErpA (110 aa).

Cys-38, Cys-102, and Cys-104 together coordinate iron-sulfur cluster.

This sequence belongs to the HesB/IscA family. In terms of assembly, homodimer. It depends on iron-sulfur cluster as a cofactor.

Its function is as follows. Required for insertion of 4Fe-4S clusters for at least IspG. This Marinobacter nauticus (strain ATCC 700491 / DSM 11845 / VT8) (Marinobacter aquaeolei) protein is Iron-sulfur cluster insertion protein ErpA.